The following is a 668-amino-acid chain: DNA ligase (668 aa).

NAD(+) is bound by residues 31–35, 80–81, and E112; these read DAEYD and SL. K114 serves as the catalytic N6-AMP-lysine intermediate. 4 residues coordinate NAD(+): R135, E172, K289, and K313. 4 residues coordinate Zn(2+): C407, C410, C425, and C431. A BRCT domain is found at 591–668; that stretch reads SVPQPLAGKV…NEEQLIELLN (78 aa).

It belongs to the NAD-dependent DNA ligase family. LigA subfamily. It depends on Mg(2+) as a cofactor. Mn(2+) is required as a cofactor.

The enzyme catalyses NAD(+) + (deoxyribonucleotide)n-3'-hydroxyl + 5'-phospho-(deoxyribonucleotide)m = (deoxyribonucleotide)n+m + AMP + beta-nicotinamide D-nucleotide.. Functionally, DNA ligase that catalyzes the formation of phosphodiester linkages between 5'-phosphoryl and 3'-hydroxyl groups in double-stranded DNA using NAD as a coenzyme and as the energy source for the reaction. It is essential for DNA replication and repair of damaged DNA. This chain is DNA ligase, found in Aliivibrio fischeri (strain ATCC 700601 / ES114) (Vibrio fischeri).